We begin with the raw amino-acid sequence, 316 residues long: CD276 antigen (316 aa).

Residues 1–28 (MLRGWGGPSVGVSMGTALGVLCLCLTGA) form the signal peptide. Residues 29 to 139 (VEVQVSEDPV…DSAAVSLQVA (111 aa)) form the Ig-like V-type domain. At 29–248 (VEVQVSEDPV…GQPMTFPPEA (220 aa)) the chain is on the extracellular side. N-linked (GlcNAc...) asparagine glycans are attached at residues asparagine 104, asparagine 189, and asparagine 215. Residues 145-238 (PSMTLEPNKD…QDAHGSVTIT (94 aa)) enclose the Ig-like C2-type domain. A disulfide bond links cysteine 165 and cysteine 220. The chain crosses the membrane as a helical span at residues 249-269 (LWVTVGLSVCLVILLVALAFV). Residues 270–316 (CWRKIKQSCEEENAGAEDQDGDGEGSKTALRPLKHSENKEDDGQEIA) are Cytoplasmic-facing. Residues 281 to 292 (ENAGAEDQDGDG) show a composition bias toward acidic residues. The interval 281 to 316 (ENAGAEDQDGDGEGSKTALRPLKHSENKEDDGQEIA) is disordered.

The protein belongs to the immunoglobulin superfamily. BTN/MOG family. In terms of assembly, interacts with TREML2 and this interaction enhances T-cell activation.

The protein resides in the membrane. Modulates T-cell-mediated immune responses and the development of acute and chronic transplant rejection. May play a positive regulatory role in bone formation and has a dual role in the bone-immune interface. Induces antitumor immunity as it activates both acquired and innate immunity leading to natural killer cell and CD8 T-cell dependent killing of tumor cells. The protein is CD276 antigen (Cd276) of Rattus norvegicus (Rat).